The primary structure comprises 395 residues: S-adenosylmethionine synthase 2 (395 aa).

Residue Glu-9 coordinates Mg(2+). His-15 lines the ATP pocket. Glu-43 serves as a coordination point for K(+). L-methionine-binding residues include Glu-56 and Gln-99. Residues 167–169 (DGK), 235–238 (SGRF), Asp-246, 252–253 (RK), Ala-269, Lys-273, and Lys-277 each bind ATP. Asp-246 is an L-methionine binding site. Lys-277 provides a ligand contact to L-methionine.

The protein belongs to the AdoMet synthase family. In terms of assembly, homotetramer. Mn(2+) is required as a cofactor. Requires Mg(2+) as cofactor. The cofactor is Co(2+). K(+) serves as cofactor.

The protein resides in the cytoplasm. It carries out the reaction L-methionine + ATP + H2O = S-adenosyl-L-methionine + phosphate + diphosphate. The protein operates within amino-acid biosynthesis; S-adenosyl-L-methionine biosynthesis; S-adenosyl-L-methionine from L-methionine: step 1/1. In terms of biological role, catalyzes the formation of S-adenosylmethionine from methionine and ATP. The reaction comprises two steps that are both catalyzed by the same enzyme: formation of S-adenosylmethionine (AdoMet) and triphosphate, and subsequent hydrolysis of the triphosphate. The protein is S-adenosylmethionine synthase 2 (METK2) of Suaeda salsa (Seepweed).